We begin with the raw amino-acid sequence, 275 residues long: 2-C-methyl-D-erythritol 4-phosphate cytidylyltransferase (275 aa).

Belongs to the IspD/TarI cytidylyltransferase family. IspD subfamily.

It catalyses the reaction 2-C-methyl-D-erythritol 4-phosphate + CTP + H(+) = 4-CDP-2-C-methyl-D-erythritol + diphosphate. It functions in the pathway isoprenoid biosynthesis; isopentenyl diphosphate biosynthesis via DXP pathway; isopentenyl diphosphate from 1-deoxy-D-xylulose 5-phosphate: step 2/6. Its function is as follows. Catalyzes the formation of 4-diphosphocytidyl-2-C-methyl-D-erythritol from CTP and 2-C-methyl-D-erythritol 4-phosphate (MEP). The chain is 2-C-methyl-D-erythritol 4-phosphate cytidylyltransferase from Corynebacterium jeikeium (strain K411).